We begin with the raw amino-acid sequence, 297 residues long: ER membrane protein complex subunit 2-B (297 aa).

TPR repeat units lie at residues 87-120 (HRVK…DPTN), 155-188 (QEAW…NPHN), and 192-225 (YQQF…NNHS).

Belongs to the EMC2 family. In terms of assembly, component of the ER membrane protein complex (EMC).

Its subcellular location is the endoplasmic reticulum membrane. In terms of biological role, part of the endoplasmic reticulum membrane protein complex (EMC) that enables the energy-independent insertion into endoplasmic reticulum membranes of newly synthesized membrane proteins. Preferentially accommodates proteins with transmembrane domains that are weakly hydrophobic or contain destabilizing features such as charged and aromatic residues. Involved in the cotranslational insertion of multi-pass membrane proteins in which stop-transfer membrane-anchor sequences become ER membrane spanning helices. It is also required for the post-translational insertion of tail-anchored/TA proteins in endoplasmic reticulum membranes. By mediating the proper cotranslational insertion of N-terminal transmembrane domains in an N-exo topology, with translocated N-terminus in the lumen of the ER, controls the topology of multi-pass membrane proteins. By regulating the insertion of various proteins in membranes, it is indirectly involved in many cellular processes. The protein is ER membrane protein complex subunit 2-B (emc2-b) of Xenopus laevis (African clawed frog).